A 476-amino-acid chain; its full sequence is Glutamate--tRNA ligase (476 aa).

The 'HIGH' region signature appears at proline 9–threonine 19. Positions lysine 248–arginine 252 match the 'KMSKS' region motif. Lysine 251 is a binding site for ATP.

It belongs to the class-I aminoacyl-tRNA synthetase family. Glutamate--tRNA ligase type 1 subfamily. In terms of assembly, monomer.

It is found in the cytoplasm. The enzyme catalyses tRNA(Glu) + L-glutamate + ATP = L-glutamyl-tRNA(Glu) + AMP + diphosphate. Its function is as follows. Catalyzes the attachment of glutamate to tRNA(Glu) in a two-step reaction: glutamate is first activated by ATP to form Glu-AMP and then transferred to the acceptor end of tRNA(Glu). The polypeptide is Glutamate--tRNA ligase (Prochlorococcus marinus (strain AS9601)).